Consider the following 202-residue polypeptide: Transcription factor IBH1 (202 aa).

The span at 1–16 (MDAKRTPPPPTPPNPN) shows a compositional bias: pro residues. Residues 1-33 (MDAKRTPPPPTPPNPNPSVIGSGAAADGGGFGR) are disordered. The 50-residue stretch at 136–185 (TSAAARAVPPPPRQQGEPPRADALRRLVPGGAGMEYSSLLEETADYLRSL) folds into the bHLH domain.

It belongs to the bHLH protein family. In terms of assembly, interacts with ILI1.

Its function is as follows. Atypical and probable non DNA-binding bHLH transcription factor that acts as a negative regulator of cell elongation and plant development. Binds the transcription factor ILI1 and forms a heterodimer of antagonistic bHLH transcription factors that function downstream of BZR1 to mediate brassinosteroid regulation of cell elongation and lamina inclination. This Oryza sativa subsp. indica (Rice) protein is Transcription factor IBH1 (IBH1).